The following is a 495-amino-acid chain: Protein SLENDER RICE1-LIKE 1 (495 aa).

Residues 77–449 enclose the GRAS domain; sequence EEEEVAGIRL…RPLFSASAWE (373 aa). A leucine repeat I (LRI) region spans residues 84–140; it reads IRLVHLLMSCAGAIEAGDHALASAQLADSHAALAAVSAASGIGRVAVHFTTALSRRL. The tract at residues 158 to 223 is VHIID; that stretch reads YHHFYEACPY…GGPPFLRITG (66 aa). The VHIID signature appears at 189-193; it reads VHVID. The leucine repeat II (LRII) stretch occupies residues 237-269; that stretch reads DVGLRLADLARSVRVRFSFRGVAANSLDEVRPW. Residues 279 to 371 are PFYRE; that stretch reads VAFNSVLQLH…EAYLQREICD (93 aa). Residues 287–291 carry the LXXLL motif motif; the sequence is LHRLL. Residues 374-449 are SAW; sequence CGEGAARRER…RPLFSASAWE (76 aa). The interval 451 to 495 is disordered; the sequence is AGDGGGDNNNNSNSNVSGSSGSDSNNSGSSNGKSSGARDGSSVCL. Over residues 458–485 the composition is skewed to low complexity; that stretch reads NNNNSNSNVSGSSGSDSNNSGSSNGKSS.

It belongs to the GRAS family. As to expression, expressed in elongating internodes and flowers. Expressed in floral meristem, stamen primordia and tapetum in developing anthers. Expressed at low levels in roots, shoot apices and rachis.

Its subcellular location is the nucleus. Functionally, probable transcriptional regulator that acts as a repressor of the gibberellin (GA) signaling pathway. Its repressive activity is weaker than that of SLR1. Its overexpression prevents the GA signaling pathway and induces a dwarf phenotype. This Oryza sativa subsp. japonica (Rice) protein is Protein SLENDER RICE1-LIKE 1.